We begin with the raw amino-acid sequence, 495 residues long: Glutamate--tRNA ligase (495 aa).

Positions 12 to 22 (PSPTGHLHIGN) match the 'HIGH' region motif. Residues 259–263 (KLSKR) carry the 'KMSKS' region motif. Lys262 is a binding site for ATP.

It belongs to the class-I aminoacyl-tRNA synthetase family. Glutamate--tRNA ligase type 1 subfamily. In terms of assembly, monomer.

It localises to the cytoplasm. It catalyses the reaction tRNA(Glu) + L-glutamate + ATP = L-glutamyl-tRNA(Glu) + AMP + diphosphate. In terms of biological role, catalyzes the attachment of glutamate to tRNA(Glu) in a two-step reaction: glutamate is first activated by ATP to form Glu-AMP and then transferred to the acceptor end of tRNA(Glu). This chain is Glutamate--tRNA ligase, found in Pediococcus pentosaceus (strain ATCC 25745 / CCUG 21536 / LMG 10740 / 183-1w).